The primary structure comprises 507 residues: Histidine ammonia-lyase (507 aa).

The segment at residues 142 to 144 is a cross-link (5-imidazolinone (Ala-Gly)); it reads ASG. Ser143 bears the 2,3-didehydroalanine (Ser) mark.

Belongs to the PAL/histidase family. Contains an active site 4-methylidene-imidazol-5-one (MIO), which is formed autocatalytically by cyclization and dehydration of residues Ala-Ser-Gly.

The protein localises to the cytoplasm. It carries out the reaction L-histidine = trans-urocanate + NH4(+). It functions in the pathway amino-acid degradation; L-histidine degradation into L-glutamate; N-formimidoyl-L-glutamate from L-histidine: step 1/3. The protein is Histidine ammonia-lyase of Maricaulis maris (strain MCS10) (Caulobacter maris).